Here is a 129-residue protein sequence, read N- to C-terminus: Glycine cleavage system H protein (129 aa).

Residues Thr-24–Arg-106 enclose the Lipoyl-binding domain. Lys-65 is subject to N6-lipoyllysine.

The protein belongs to the GcvH family. As to quaternary structure, the glycine cleavage system is composed of four proteins: P, T, L and H. (R)-lipoate is required as a cofactor.

Functionally, the glycine cleavage system catalyzes the degradation of glycine. The H protein shuttles the methylamine group of glycine from the P protein to the T protein. The chain is Glycine cleavage system H protein from Enterobacter sp. (strain 638).